Reading from the N-terminus, the 59-residue chain is uncharacterized protein (59 aa).

This is an uncharacterized protein from Haemophilus influenzae (strain ATCC 51907 / DSM 11121 / KW20 / Rd).